The chain runs to 249 residues: Ubiquinone biosynthesis O-methyltransferase (249 aa).

The S-adenosyl-L-methionine site is built by R41, G72, D93, and M136.

The protein belongs to the methyltransferase superfamily. UbiG/COQ3 family.

The enzyme catalyses a 3-demethylubiquinol + S-adenosyl-L-methionine = a ubiquinol + S-adenosyl-L-homocysteine + H(+). It carries out the reaction a 3-(all-trans-polyprenyl)benzene-1,2-diol + S-adenosyl-L-methionine = a 2-methoxy-6-(all-trans-polyprenyl)phenol + S-adenosyl-L-homocysteine + H(+). The protein operates within cofactor biosynthesis; ubiquinone biosynthesis. O-methyltransferase that catalyzes the 2 O-methylation steps in the ubiquinone biosynthetic pathway. This chain is Ubiquinone biosynthesis O-methyltransferase, found in Methylobacterium nodulans (strain LMG 21967 / CNCM I-2342 / ORS 2060).